Consider the following 1367-residue polypeptide: DNA polymerase III PolC-type (1367 aa).

The Exonuclease domain maps to 358–513 (FVVLDFETTG…DDARVTAQVF (156 aa)).

This sequence belongs to the DNA polymerase type-C family. PolC subfamily.

It is found in the cytoplasm. It carries out the reaction DNA(n) + a 2'-deoxyribonucleoside 5'-triphosphate = DNA(n+1) + diphosphate. Functionally, required for replicative DNA synthesis. This DNA polymerase also exhibits 3' to 5' exonuclease activity. The protein is DNA polymerase III PolC-type of Thermotoga petrophila (strain ATCC BAA-488 / DSM 13995 / JCM 10881 / RKU-1).